The sequence spans 201 residues: Protocatechuate 3,4-dioxygenase alpha chain (201 aa).

R134 lines the 3,4-dihydroxybenzoate pocket.

It belongs to the intradiol ring-cleavage dioxygenase family. The enzyme is an oligomer of 12 copies of the alpha and beta chains. Requires Fe(3+) as cofactor.

The enzyme catalyses 3,4-dihydroxybenzoate + O2 = 3-carboxy-cis,cis-muconate + 2 H(+). It participates in aromatic compound metabolism; beta-ketoadipate pathway; 3-carboxy-cis,cis-muconate from 3,4-dihydroxybenzoate: step 1/1. Plays an essential role in the utilization of numerous aromatic and hydroaromatic compounds via the beta-ketoadipate pathway. The chain is Protocatechuate 3,4-dioxygenase alpha chain (pcaG) from Pseudomonas putida (Arthrobacter siderocapsulatus).